The primary structure comprises 109 residues: Nucleoid-associated protein PC1_1077 (109 aa).

This sequence belongs to the YbaB/EbfC family. As to quaternary structure, homodimer.

Its subcellular location is the cytoplasm. It is found in the nucleoid. Its function is as follows. Binds to DNA and alters its conformation. May be involved in regulation of gene expression, nucleoid organization and DNA protection. This chain is Nucleoid-associated protein PC1_1077, found in Pectobacterium carotovorum subsp. carotovorum (strain PC1).